The sequence spans 377 residues: uncharacterized protein (377 aa).

The next 7 membrane-spanning stretches (helical) occupy residues 21 to 41 (WLLA…LVLF), 66 to 86 (LVTF…FGLG), 163 to 183 (IGVL…GIVL), 197 to 217 (AILF…IAII), 236 to 256 (FYMG…YHIF), 292 to 312 (VNLI…FLIL), and 339 to 359 (IYFL…ELLF).

It localises to the cell membrane. This is an uncharacterized protein from Mycoplasma pneumoniae (strain ATCC 29342 / M129 / Subtype 1) (Mycoplasmoides pneumoniae).